A 199-amino-acid chain; its full sequence is Peroxiredoxin-1 (199 aa).

Residues 6 to 165 (AYIGKLAPDF…TLRLVQAFQF (160 aa)) form the Thioredoxin domain. The Cysteine sulfenic acid (-SOH) intermediate role is filled by cysteine 52.

Belongs to the peroxiredoxin family. AhpC/Prx1 subfamily. In terms of assembly, homodimer; disulfide-linked, upon oxidation. 5 homodimers assemble to form a ring-like decamer. Interacts with GDPD5; forms a mixed-disulfide with GDPD5. Interacts with SESN1 and SESN2. Interacts with FAM107A. The enzyme can be inactivated by further oxidation of the cysteine sulfenic acid (C(P)-SOH) to sulphinic acid (C(P)-SO2H) instead of its condensation to a disulfide bond. It can be reactivated by forming a transient disulfide bond with sulfiredoxin SRXN1, which reduces the cysteine sulfinic acid in an ATP- and Mg-dependent manner.

Its subcellular location is the cytoplasm. It carries out the reaction a hydroperoxide + [thioredoxin]-dithiol = an alcohol + [thioredoxin]-disulfide + H2O. Its function is as follows. Thiol-specific peroxidase that catalyzes the reduction of hydrogen peroxide and organic hydroperoxides to water and alcohols, respectively. Plays a role in cell protection against oxidative stress by detoxifying peroxides and as sensor of hydrogen peroxide-mediated signaling events. Might participate in the signaling cascades of growth factors and tumor necrosis factor-alpha by regulating the intracellular concentrations of H(2)O(2). Reduces an intramolecular disulfide bond in GDPD5 that gates the ability to GDPD5 to drive postmitotic motor neuron differentiation. The chain is Peroxiredoxin-1 (PRDX1) from Gekko japonicus (Schlegel's Japanese gecko).